Here is a 272-residue protein sequence, read N- to C-terminus: Putative phosphoenolpyruvate synthase regulatory protein (272 aa).

152–159 (GVSRCGKT) is a binding site for ADP.

The protein belongs to the pyruvate, phosphate/water dikinase regulatory protein family. PSRP subfamily.

The enzyme catalyses [pyruvate, water dikinase] + ADP = [pyruvate, water dikinase]-phosphate + AMP + H(+). It carries out the reaction [pyruvate, water dikinase]-phosphate + phosphate + H(+) = [pyruvate, water dikinase] + diphosphate. Its function is as follows. Bifunctional serine/threonine kinase and phosphorylase involved in the regulation of the phosphoenolpyruvate synthase (PEPS) by catalyzing its phosphorylation/dephosphorylation. The protein is Putative phosphoenolpyruvate synthase regulatory protein of Ectopseudomonas mendocina (strain ymp) (Pseudomonas mendocina).